Consider the following 484-residue polypeptide: Oxysterol-binding protein-related protein 2 (484 aa).

A phosphoserine mark is found at Ser-19 and Ser-20. Residues 35–61 form a disordered region; it reads DLDTSKSTRSGKNGEKPQQENGIQKHR. A 1,2-diacyl-sn-glycero-3-phospho-(1D-myo-inositol-4,5-bisphosphate) is bound by residues Lys-90 and 178-179; that span reads HH. 2 stretches are compositionally biased toward basic and acidic residues: residues 319 to 340 and 424 to 450; these read KQEK…EKAN and SQEK…EWRT. Disordered stretches follow at residues 319 to 348 and 423 to 454; these read KQEK…GDVA and ASQE…RWFS. 431 to 435 lines the a 1,2-diacyl-sn-glycero-3-phospho-(1D-myo-inositol-4,5-bisphosphate) pocket; it reads EEKQR.

The protein belongs to the OSBP family. Monomer. Homotetramer; phosphatidylinositol-4,5-bisphosphate binding promotes formation of stable tetramers. Interacts with DIAPH1. In terms of tissue distribution, detected in cochlea, in inner and outer hair cells in the organ of Corti (at protein level).

Its subcellular location is the cytoplasm. The protein resides in the cytosol. It localises to the lipid droplet. It is found in the cell membrane. Intracellular transport protein that binds sterols and phospholipids and mediates lipid transport between intracellular compartments. Increases plasma membrane cholesterol levels and decreases phosphatidylinositol-4,5-bisphosphate levels in the cell membrane. Binds phosphoinositides, such as phosphatidylinositol-4,5-bisphosphate. Exhibits strong binding to phosphatidic acid and weak binding to phosphatidylinositol 3-phosphate. Binds cholesterol, dehydroergosterol, 22(R)-hydroxycholesterol and 25-hydroxycholesterol (in vitro). The sequence is that of Oxysterol-binding protein-related protein 2 (Osbpl2) from Mus musculus (Mouse).